The primary structure comprises 140 residues: uncharacterized protein (140 aa).

This is an uncharacterized protein from Escherichia coli (strain K12).